A 391-amino-acid polypeptide reads, in one-letter code: MSDLKSRLIKASTSKLTAELTASKFFNEKDVVRTKIPMMNIALSGEITGGMQSGLLILAGPSKSFKSNFGLTMVSSYMRQYPDAVCLFYDSEFGITPAYLRSMGVDPERVIHTPVQSLEQLRIDMVNQLDAIERGEKVVVFIDSLGNLASKKETEDALNEKVVSDMTRAKTMKSLFRIVTPYFSTKNIPCIAINHTYETQEMFSKTVMGGGTGPMYSADTVFIIGKRQIKDGSDLQGYQFVLNVEKSRTVKEKSKFFIDVKFDGGIDPYSGLLDMALELGFVVKPKNGWYAREFLDEETGEMIREEKSWRAKDTNCTTFWGPLFKHQPFRDAIKRAYQLGAIDSNEIVEAEVDELINSKVEKFKSPESKSKSAADLETDLEQLSDMEEFNE.

60-67 (GPSKSFKS) contacts ATP. The span at 364–374 (KSPESKSKSAA) shows a compositional bias: basic and acidic residues. The interval 364–391 (KSPESKSKSAADLETDLEQLSDMEEFNE) is disordered. Acidic residues predominate over residues 376–391 (LETDLEQLSDMEEFNE).

Belongs to the RecA family.

Its function is as follows. Important in genetic recombination, DNA repair, and replication. Possesses pairing and strand-transfer activity. Interacts with dda and gene 32 proteins. This is Recombination and repair protein (UVSX) from Enterobacteria phage T4 (Bacteriophage T4).